Here is a 123-residue protein sequence, read N- to C-terminus: UPF0738 protein BCG9842_B4089 (123 aa).

The protein belongs to the UPF0738 family.

This chain is UPF0738 protein BCG9842_B4089, found in Bacillus cereus (strain G9842).